We begin with the raw amino-acid sequence, 144 residues long: NADH-ubiquinone oxidoreductase chain 6 (144 aa).

Helical transmembrane passes span 1–21 (MIKL…MNID), 25–45 (SSFF…MSMH), 46–66 (IWFS…ILVY), 75–95 (VVKS…FSPV), and 108–128 (FYYS…LFFM).

Belongs to the complex I subunit 6 family.

Its subcellular location is the mitochondrion membrane. It carries out the reaction a ubiquinone + NADH + 5 H(+)(in) = a ubiquinol + NAD(+) + 4 H(+)(out). Functionally, core subunit of the mitochondrial membrane respiratory chain NADH dehydrogenase (Complex I) that is believed to belong to the minimal assembly required for catalysis. Complex I functions in the transfer of electrons from NADH to the respiratory chain. The immediate electron acceptor for the enzyme is believed to be ubiquinone. The polypeptide is NADH-ubiquinone oxidoreductase chain 6 (nd6) (Caenorhabditis briggsae).